The primary structure comprises 177 residues: Large ribosomal subunit protein uL5 (177 aa).

Belongs to the universal ribosomal protein uL5 family. In terms of assembly, part of the 50S ribosomal subunit; part of the 5S rRNA/L5/L18/L25 subcomplex. Contacts the 5S rRNA and the P site tRNA. Forms a bridge to the 30S subunit in the 70S ribosome.

Its function is as follows. This is one of the proteins that bind and probably mediate the attachment of the 5S RNA into the large ribosomal subunit, where it forms part of the central protuberance. In the 70S ribosome it contacts protein S13 of the 30S subunit (bridge B1b), connecting the 2 subunits; this bridge is implicated in subunit movement. Contacts the P site tRNA; the 5S rRNA and some of its associated proteins might help stabilize positioning of ribosome-bound tRNAs. The polypeptide is Large ribosomal subunit protein uL5 (Ehrlichia ruminantium (strain Welgevonden)).